The sequence spans 314 residues: uncharacterized protein (314 aa).

Residues 68 to 91 show a composition bias toward basic and acidic residues; that stretch reads EKKKKSSSFEKRDKRRVQLKEKSP. 2 disordered regions span residues 68 to 97 and 141 to 164; these read EKKK…TPRN and MDVQ…RPAS. Residues 144–157 are compositionally biased toward polar residues; the sequence is QSPSTMSTSKNNVR.

The protein resides in the mitochondrion. This is an uncharacterized protein from Schizosaccharomyces pombe (strain 972 / ATCC 24843) (Fission yeast).